Here is a 62-residue protein sequence, read N- to C-terminus: uncharacterized protein (62 aa).

Positions 1-18 (MTTNRVDPLEQTSPNTPT) are enriched in polar residues. The disordered stretch occupies residues 1 to 24 (MTTNRVDPLEQTSPNTPTSKREKA).

This is an uncharacterized protein from Rickettsia conorii (strain ATCC VR-613 / Malish 7).